A 481-amino-acid chain; its full sequence is Glutamine synthetase (481 aa).

Residues 22–106 (NEVEFVDFRF…VFCDVYDVYK (85 aa)) enclose the GS beta-grasp domain. The GS catalytic domain occupies 114 to 481 (PRSIAKKALQ…PFEFITTYSC (368 aa)). Mg(2+) is bound by residues glutamate 139, glutamate 141, glutamate 223, and glutamate 230. L-glutamate-binding positions include 274 to 275 (NG) and glycine 275. Residue histidine 279 participates in Mg(2+) binding. ATP-binding positions include 281–283 (HVS) and serine 283. Residues arginine 331, glutamate 337, and arginine 349 each contribute to the L-glutamate site. The ATP site is built by arginine 349 and arginine 354. Glutamate 367 lines the Mg(2+) pocket. Arginine 369 provides a ligand contact to L-glutamate.

The protein belongs to the glutamine synthetase family. As to quaternary structure, oligomer of 12 subunits arranged in the form of two hexameric ring. Mg(2+) serves as cofactor.

Its subcellular location is the cytoplasm. The enzyme catalyses L-glutamate + NH4(+) + ATP = L-glutamine + ADP + phosphate + H(+). The activity of this enzyme could be controlled by adenylation under conditions of abundant glutamine. In terms of biological role, catalyzes the ATP-dependent biosynthesis of glutamine from glutamate and ammonia. In Helicobacter pylori (strain ATCC 700392 / 26695) (Campylobacter pylori), this protein is Glutamine synthetase.